Here is a 73-residue protein sequence, read N- to C-terminus: Carboxysome shell vertex protein CsoS4B (73 aa).

Positions 1–68 (MVCTQRVAGL…TDLTIGGIID (68 aa)) constitute a BMV domain.

It belongs to the CcmL/EutN family. CsoS4 subfamily. Homopentamer.

The protein resides in the carboxysome. Functionally, probably forms vertices in the carboxysome, a polyhedral inclusion where RuBisCO (ribulose bisphosphate carboxylase, cbbL-cbbS) is sequestered. Has been modeled to induce curvature upon insertion into an otherwise flat hexagonal layer of major carboxysome subunits. Has not been identified in purified carboxysomes; it is expected to be present in very low amounts. The polypeptide is Carboxysome shell vertex protein CsoS4B (Prochlorococcus marinus subsp. pastoris (strain CCMP1986 / NIES-2087 / MED4)).